A 61-amino-acid polypeptide reads, in one-letter code: uncharacterized protein (61 aa).

The signal sequence occupies residues 1–28; that stretch reads MHRRARRMPMRPRRSKRVRNRYTMGTFA.

This is an uncharacterized protein from Mycobacterium tuberculosis (strain ATCC 25618 / H37Rv).